Consider the following 510-residue polypeptide: Protein phosphatase 1H (510 aa).

The region spanning 73–503 is the PPM-type phosphatase domain; the sequence is STGYAEVINA…DDISVYVIPL (431 aa). Disordered stretches follow at residues 105-128 and 188-225; these read VQSTPNKNSSSKRRSSLPNAEGLQ and LGEEPESTSSNSRTLTRAASLRGGSGAPGSPSTPPTRF.

Belongs to the PP2C family.

The protein localises to the nucleus. Its subcellular location is the cytoplasm. The catalysed reaction is O-phospho-L-seryl-[protein] + H2O = L-seryl-[protein] + phosphate. It carries out the reaction O-phospho-L-threonyl-[protein] + H2O = L-threonyl-[protein] + phosphate. This chain is Protein phosphatase 1H (ppm1h), found in Xenopus tropicalis (Western clawed frog).